The sequence spans 341 residues: MSTDKISVLLNWHATPYHLPIFVAQSKGFFAKEGIKVAILEPNDPSDVTELIGSGKADLGCKAMIHTLAGKARGFPIKSIGTLMDEPFTGVIYLEGSGITSDFRSLKGKRIGYVGEFGKIQIDELTKYYGMTSKDYTAVRCGMNVSKAIIEGTIDAGIGLENIQQVELEEWCKANNRPASDVKMLRIDELAELGCCCFCSILYIANEDWLKDHPKETAAFMRAVKAGADAMFADPRGSWAEYCKVKPAMNTPLNRIMFDRSFNYMSQDLINVSRDWNKVTNYSKRLGIVPEDFVSNYTNEFVQWEVAPEGGEAEGLAKQQEMKTLQAHVAEHGGVLQAVTA.

Residue Lys62 is modified to N6-(pyridoxal phosphate)lysine. His66 is a catalytic residue. 115-118 is a binding site for pyridoxal 5'-phosphate; sequence GEFG. The CCCFC; essential for catalytic activity, may be the site of iron coordination signature appears at 195–199; it reads CCCFC.

It belongs to the NMT1/THI5 family. As to quaternary structure, homodimer. Fe cation serves as cofactor.

The catalysed reaction is N(6)-(pyridoxal phosphate)-L-lysyl-[4-amino-5-hydroxymethyl-2-methylpyrimidine phosphate synthase] + L-histidyl-[4-amino-5-hydroxymethyl-2-methylpyrimidine phosphate synthase] + 2 Fe(3+) + 4 H2O = L-lysyl-[4-amino-5-hydroxymethyl-2-methylpyrimidine phosphate synthase] + (2S)-2-amino-5-hydroxy-4-oxopentanoyl-[4-amino-5-hydroxymethyl-2-methylpyrimidine phosphate synthase] + 4-amino-2-methyl-5-(phosphooxymethyl)pyrimidine + 3-oxopropanoate + 2 Fe(2+) + 2 H(+). The protein operates within cofactor biosynthesis; thiamine diphosphate biosynthesis. Its function is as follows. Responsible for the formation of the pyrimidine heterocycle in the thiamine biosynthesis pathway. Catalyzes the formation of hydroxymethylpyrimidine phosphate (HMP-P) from histidine and pyridoxal phosphate (PLP). The protein uses PLP and the active site histidine to form HMP-P, generating an inactive enzyme. The enzyme can only undergo a single turnover, which suggests it is a suicide enzyme. This is 4-amino-5-hydroxymethyl-2-methylpyrimidine phosphate synthase from Uromyces fabae (Rust fungus).